A 265-amino-acid chain; its full sequence is UPF0354 protein GWCH70_2742 (265 aa).

This sequence belongs to the UPF0354 family.

This is UPF0354 protein GWCH70_2742 from Geobacillus sp. (strain WCH70).